A 393-amino-acid chain; its full sequence is F-box protein KIB4 (393 aa).

One can recognise an F-box domain in the interval 12–59 (AKQPILVLDLVRLVLERLSFVDFHRARCVSSVWYSASKSCIGGTNPTA).

It localises to the cytoplasm. Its subcellular location is the nucleus. The protein localises to the nucleolus. Its function is as follows. Component of SCF(ASK-cullin-F-box) E3 ubiquitin ligase complexes, which may mediate the ubiquitination and subsequent proteasomal degradation of target proteins. Required for brassinosteroid (BR) signal transduction. Mediates ASK7/BIN2/SK21 inactivation both by competing with substrate binding (e.g. BZR1) and by promoting its ubiquitination and subsequent proteasomal degradation. The chain is F-box protein KIB4 from Arabidopsis thaliana (Mouse-ear cress).